The following is a 535-amino-acid chain: Cytochrome c oxidase subunit 1 (535 aa).

The chain crosses the membrane as a helical span at residues 17–37; the sequence is ILYFIFAIFSGVIGSTMSLII. 3 residues coordinate Ca(2+): Glu40, Ala43, and Gly45. 6 helical membrane passes run 58-78, 104-124, 147-167, 184-204, 236-256, and 268-288; these read VLVVGHALLMIFFLVMPGLVG, FWLLPPALVCLVASTLIESWA, LGIFAIHLTSISSLLGAINFI, PLFVWAIIITAVMLLLSLPVL, LFWFFGHPEVYILIVPGFGII, and VFGEISMVYAMASIAFLGFLV. His63 contacts Fe(II)-heme a. His242 provides a ligand contact to Cu cation. Positions 242-246 form a cross-link, 1'-histidyl-3'-tyrosine (His-Tyr); that stretch reads HPEVY. Tyr246 provides a ligand contact to O2. Cu cation is bound by residues His291 and His292. 2 helical membrane-spanning segments follow: residues 311–331 and 339–359; these read MVIAVPTGIKIFSWLATLYGG and MLYAIAFLFLFTIGGLTGVAL. Mg(2+) contacts are provided by His369 and Asp370. Helical transmembrane passes span 373–393 and 413–433; these read YVVGHFHYVLSMGAIFSLFAG and IQFWLIFVGANVIFMPMHFLG. Residue His377 participates in heme a3 binding. Position 379 (His379) interacts with Fe(II)-heme a. Residue Pro442 coordinates Ca(2+). A helical membrane pass occupies residues 453–473; the sequence is YVSSIGSVIAIISLALFIYII.

The protein belongs to the heme-copper respiratory oxidase family. As to quaternary structure, component of the cytochrome c oxidase (complex IV, CIV), a multisubunit enzyme composed of a catalytic core of 3 subunits and several supernumerary subunits. The complex exists as a monomer or a dimer and forms supercomplexes (SCs) in the inner mitochondrial membrane with ubiquinol-cytochrome c oxidoreductase (cytochrome b-c1 complex, complex III, CIII). Heme is required as a cofactor. The cofactor is Cu cation.

Its subcellular location is the mitochondrion inner membrane. It carries out the reaction 4 Fe(II)-[cytochrome c] + O2 + 8 H(+)(in) = 4 Fe(III)-[cytochrome c] + 2 H2O + 4 H(+)(out). It functions in the pathway energy metabolism; oxidative phosphorylation. Component of the cytochrome c oxidase, the last enzyme in the mitochondrial electron transport chain which drives oxidative phosphorylation. The respiratory chain contains 3 multisubunit complexes succinate dehydrogenase (complex II, CII), ubiquinol-cytochrome c oxidoreductase (cytochrome b-c1 complex, complex III, CIII) and cytochrome c oxidase (complex IV, CIV), that cooperate to transfer electrons derived from NADH and succinate to molecular oxygen, creating an electrochemical gradient over the inner membrane that drives transmembrane transport and the ATP synthase. Cytochrome c oxidase is the component of the respiratory chain that catalyzes the reduction of oxygen to water. Electrons originating from reduced cytochrome c in the intermembrane space (IMS) are transferred via the dinuclear copper A center (CU(A)) of subunit 2 and heme A of subunit 1 to the active site in subunit 1, a binuclear center (BNC) formed by heme A3 and copper B (CU(B)). The BNC reduces molecular oxygen to 2 water molecules using 4 electrons from cytochrome c in the IMS and 4 protons from the mitochondrial matrix. This chain is Cytochrome c oxidase subunit 1 (COX1), found in Wickerhamomyces canadensis (Yeast).